A 483-amino-acid polypeptide reads, in one-letter code: Isocitrate dehydrogenase [NADP] (483 aa).

Threonine 74 provides a ligand contact to NADP(+). 5 residues coordinate D-threo-isocitrate: serine 83, asparagine 85, arginine 89, arginine 99, and arginine 121. Mg(2+) is bound at residue aspartate 232. Residues 264–270 (HGSAPDI) and asparagine 277 contribute to the NADP(+) site.

This sequence belongs to the isocitrate and isopropylmalate dehydrogenases family. As to quaternary structure, homodimer. Mg(2+) serves as cofactor. It depends on Mn(2+) as a cofactor.

The enzyme catalyses D-threo-isocitrate + NADP(+) = 2-oxoglutarate + CO2 + NADPH. Functionally, catalyzes the oxidative decarboxylation of isocitrate to 2-oxoglutarate and carbon dioxide with the concomitant reduction of NADP(+). In Rickettsia typhi (strain ATCC VR-144 / Wilmington), this protein is Isocitrate dehydrogenase [NADP] (icd).